The sequence spans 199 residues: Proteasome subunit beta 2 (199 aa).

A propeptide spans 1–6 (MEKKTG) (removed in mature form; by autocatalysis). Threonine 7 functions as the Nucleophile in the catalytic mechanism.

It belongs to the peptidase T1B family. The 20S proteasome core is composed of 14 alpha and 14 beta subunits that assemble into four stacked heptameric rings, resulting in a barrel-shaped structure. The two inner rings, each composed of seven catalytic beta subunits, are sandwiched by two outer rings, each composed of seven alpha subunits. The catalytic chamber with the active sites is on the inside of the barrel. Has a gated structure, the ends of the cylinder being occluded by the N-termini of the alpha-subunits. Is capped at one or both ends by the proteasome regulatory ATPase, PAN.

The protein localises to the cytoplasm. The enzyme catalyses Cleavage of peptide bonds with very broad specificity.. The formation of the proteasomal ATPase PAN-20S proteasome complex, via the docking of the C-termini of PAN into the intersubunit pockets in the alpha-rings, triggers opening of the gate for substrate entry. Interconversion between the open-gate and close-gate conformations leads to a dynamic regulation of the 20S proteasome proteolysis activity. Functionally, component of the proteasome core, a large protease complex with broad specificity involved in protein degradation. This is Proteasome subunit beta 2 from Thermococcus kodakarensis (strain ATCC BAA-918 / JCM 12380 / KOD1) (Pyrococcus kodakaraensis (strain KOD1)).